A 720-amino-acid chain; its full sequence is ABC transporter G family member STR2 (720 aa).

Topologically, residues 1-467 are cytoplasmic; that stretch reads MRHANGRRGD…NFINIRRTPE (467 aa). One can recognise an ABC transporter domain in the interval 25–274; that stretch reads LEFSNLTYTV…LGRMGRKVPK (250 aa). 70–77 contributes to the ATP binding site; the sequence is GPSGAGKS. The interval 313–346 is disordered; that stretch reads GAHEMSIVPPSPAPSHREGRGHDRSNKRLHLKDQ. Positions 327–346 are enriched in basic and acidic residues; the sequence is SHREGRGHDRSNKRLHLKDQ. A helical membrane pass occupies residues 468–488; the sequence is LFLSRLVVLTVMGIMMATMFM. Residues 489 to 502 lie on the Extracellular side of the membrane; the sequence is HPKKNLQGITNRLS. A helical transmembrane segment spans residues 503 to 523; it reads FFIFTVCLFFFSSNDAVPAFI. The Cytoplasmic portion of the chain corresponds to 524–547; sequence QERFIFVRETSHNKYRASSYTIAG. Residues 548 to 568 traverse the membrane as a helical segment; it reads LITYLPFLAVQAAVYAVIVWF. Topologically, residues 569-575 are extracellular; sequence ALSLRGP. The chain crosses the membrane as a helical span at residues 576–596; that stretch reads FIYFLIVLYMSLLSTNSFVVF. Topologically, residues 597–604 are cytoplasmic; it reads VSSVVPNY. The chain crosses the membrane as a helical span at residues 605–625; the sequence is ILGYAAVIAFTALFFLFCGYF. The Extracellular portion of the chain corresponds to 626-693; that stretch reads LNSHDMPQYW…QVESKKWEKV (68 aa). N-linked (GlcNAc...) asparagine glycosylation occurs at N681. A helical membrane pass occupies residues 694-714; sequence YIMLAWAIVYRILFYIVLRFF. Over 715-720 the chain is Cytoplasmic; that stretch reads SKNQRT.

It belongs to the ABC transporter superfamily. ABCG family. Stunted arbuscule (STR) subfamily. As to quaternary structure, heterodimerizes with STR; the resulting transporter is located in the peri-arbuscular membrane.

The protein localises to the cell membrane. In terms of biological role, together with STR, required for arbuscule development in arbuscular mycorrhizal (AM) symbiosis. This is ABC transporter G family member STR2 from Petunia hybrida (Petunia).